The primary structure comprises 442 residues: MLNARDVCPEGNDDQQLDHNFKQMEEHLALMVEGNENEDPRKATCEYEDTNEDGATCTSGVLSEIQENFGRLRLCDVTAPLLEFHGLDCLQQIQKRSRHFAFDGSPAKKSRSGGVLVTGPKQKQLQKENVWNRKSKGSASADNIEKLPITIEKLHMIGLHGDCLEHNAVLRLMNLFRSLHDHLTADLGFSRQNSMPSDYLFDMPVKSTMPKSLNVRYQLQVLCTKVERFLVQQRRTLEANRHFDFEKYDECDKLLKGFASYLDNFKLLLKPKMRNRNGNSGSNADKFHTQRMERLLIGLRDWIKAAHLSVHVFNWEMDLEHRYSGAMTESHKSLNERAILLSGAELRAAEARGISAEDLFIAQRYKLGGPIYCVLEQHEFLSALIANPETYFPPSVVAICGPQKLGAVSMEQPSASEEEFEETEEVPSSPPRHTGRVPRFRS.

Residues 201–250 (FDMPVKSTMPKSLNVRYQLQVLCTKVERFLVQQRRTLEANRHFDFEKYDE) form a required for interaction with ubiquitin region. Residues 408-442 (VSMEQPSASEEEFEETEEVPSSPPRHTGRVPRFRS) are disordered. Acidic residues predominate over residues 416-425 (SEEEFEETEE). Residues 433-442 (HTGRVPRFRS) are compositionally biased toward basic residues.

In terms of assembly, interacts (via central region) with ubiquitin. Interacts (via C-terminus) with otu (via OTU domain); the interaction enhances otu aggregation into amyloid-like structures and enhances its deubiquitinase activity. Together with otu interacts with CycA/cyclin-A (via C-terminus); the interaction stabilizes CycA by promoting and enhancing otu dependent deubiquitination of CycA. Together with otu interacts with Traf6. Part of a complex composed of at least tut, bam and bgcn; complex formation does not require RNA. Interacts (via C-terminus) with bgcn; the interaction is direct and is not disrupted by eIF4A. Interacts with eIF4A (via multiple contacts); the interaction is direct and is not disrupted by bgcn. Interacts (via N-terminus) with tut; the interaction is direct and mediates the interaction between tut and bgcn. As part of the bam-bgcn-tut complex associates with twin; may recruit the CCR4-NOT1 deadenylation complex to mRNA 3'-UTRs to mediate post-transcriptional regulation of expression. Part of a complex composed of at least mei-P26, bam, bgcn and Sxl; this complex is involved in translational repression of nanos mRNA. Post-translationally, ubiquitinated (C-terminal region). In terms of tissue distribution, in cystoblasts and/or very early cystocytes in testis (at protein level); expression levels are regulated by mei-P26. In cystoblasts and/or very early cystocytes in ovary. Expressed in the gut; expression levels increase with age.

It localises to the cytoplasm. Regulatory component of a deubiquitinase complex consisting of bam and otu. The complex deubiquitinates K63-linked polyubiquitinated proteins, antagonizing the ubiquitination activity of Traf6 and regulating the IMD immune signaling pathway. Otu-bam deubiquitinase activity is regulated by Traf6 dependent immune signaling regulation of bam expression levels; this forms a feedback loop that regulates the IMD immune signaling pathway and balances gut immune activity during aging. The complex deubiquitinates and stabilizes CycA/cyclin-A to regulate CycA-dependent differentiation. Required to initiate both male and female gametogenesis. Part of a complex with bgcn involved in 3'-UTR-dependent translational repression of a subset of mRNAs, including those for mei-P26, nanos and shg/E-cadherin. Repression of mei-P26 is targeted by let-7 miRNA. Involved in a regulatory cascade with mei-P26 to control the progression of cystocytes through transit amplification and the switch to spermatocyte differentiation; mei-P26 facilitates bam accumulation, which in turn represses translation of mei-P26. Forms a complex with tut and bgcn involved in 3'-UTR-dependent post-transcriptional repression of several 3'-RNA processing factors, which promotes germline stem cell lineage differentiation and mitosis-to-meiosis transition. In Drosophila melanogaster (Fruit fly), this protein is Protein bag of marbles.